The following is a 635-amino-acid chain: ATP-dependent zinc metalloprotease FtsH (635 aa).

Over 1 to 4 (MVKN) the chain is Cytoplasmic. The helical transmembrane segment at 5 to 25 (LVLWVVVAVIMMTAYQSFNSS) threads the bilayer. Over 26–97 (SVENSTDYTT…VEGTPFERRG (72 aa)) the chain is Periplasmic. The helical transmembrane segment at 98–118 (FLSQILISWFPMLFLVGVWVF) threads the bilayer. Over 119–635 (FMRQMQGGGG…AVENTDDFNV (517 aa)) the chain is Cytoplasmic. Residue 191–198 (GPPGTGKT) coordinates ATP. His-413 contacts Zn(2+). Glu-414 is a catalytic residue. Zn(2+) contacts are provided by His-417 and Asp-491. A disordered region spans residues 593 to 635 (NREPVTPPSGWGEPKTQQAAYANSTTNDTKPESAVENTDDFNV). Positions 607–620 (KTQQAAYANSTTND) are enriched in polar residues.

The protein in the central section; belongs to the AAA ATPase family. In the C-terminal section; belongs to the peptidase M41 family. In terms of assembly, homohexamer. Zn(2+) serves as cofactor.

The protein localises to the cell inner membrane. In terms of biological role, acts as a processive, ATP-dependent zinc metallopeptidase for both cytoplasmic and membrane proteins. Plays a role in the quality control of integral membrane proteins. This Haemophilus influenzae (strain ATCC 51907 / DSM 11121 / KW20 / Rd) protein is ATP-dependent zinc metalloprotease FtsH.